A 316-amino-acid polypeptide reads, in one-letter code: Pantothenate kinase (316 aa).

Residue 95–102 (GSVAVGKS) participates in ATP binding.

The protein belongs to the prokaryotic pantothenate kinase family.

The protein localises to the cytoplasm. The enzyme catalyses (R)-pantothenate + ATP = (R)-4'-phosphopantothenate + ADP + H(+). It functions in the pathway cofactor biosynthesis; coenzyme A biosynthesis; CoA from (R)-pantothenate: step 1/5. This is Pantothenate kinase from Shigella dysenteriae serotype 1 (strain Sd197).